Consider the following 272-residue polypeptide: NH(3)-dependent NAD(+) synthetase (272 aa).

45 to 52 (GISGGQDS) serves as a coordination point for ATP. Aspartate 51 lines the Mg(2+) pocket. Arginine 138 lines the deamido-NAD(+) pocket. Threonine 158 is a binding site for ATP. Glutamate 163 serves as a coordination point for Mg(2+). 2 residues coordinate deamido-NAD(+): lysine 171 and aspartate 178. The ATP site is built by lysine 187 and threonine 209. 258-259 (HK) is a deamido-NAD(+) binding site.

Belongs to the NAD synthetase family. In terms of assembly, homodimer.

The enzyme catalyses deamido-NAD(+) + NH4(+) + ATP = AMP + diphosphate + NAD(+) + H(+). The protein operates within cofactor biosynthesis; NAD(+) biosynthesis; NAD(+) from deamido-NAD(+) (ammonia route): step 1/1. Its function is as follows. Catalyzes the ATP-dependent amidation of deamido-NAD to form NAD. Uses ammonia as a nitrogen source. The chain is NH(3)-dependent NAD(+) synthetase from Bacillus mycoides (strain KBAB4) (Bacillus weihenstephanensis).